A 433-amino-acid chain; its full sequence is Monodehydroascorbate reductase (433 aa).

FAD-binding positions include 12–15, Glu-39, Arg-46, Lys-51, Ile-94, and 145–146; these read GGVS and RE. Residues 170–176, Glu-194, Arg-200, and Gly-259 each bind NAD(+); that span reads GGYIGLE. 172–176 is a binding site for NADP(+); that stretch reads YIGLE. 2 residues coordinate NADP(+): Arg-200 and Gly-259. Position 296 (Asp-296) interacts with FAD. Residue 312–313 participates in NAD(+) binding; sequence EH. 312-313 contacts NADP(+); that stretch reads EH. Val-314 provides a ligand contact to FAD. Arg-318 provides a ligand contact to L-ascorbate. Tyr-347 is a binding site for FAD. An NAD(+)-binding site is contributed by Tyr-347. An NADP(+)-binding site is contributed by Tyr-347. Arg-349 serves as a coordination point for L-ascorbate.

The protein belongs to the FAD-dependent oxidoreductase family. The cofactor is FAD. In terms of tissue distribution, expressed at relatively low levels in all tissues examined.

It localises to the cytoplasm. It carries out the reaction 2 monodehydro-L-ascorbate radical + NADH + H(+) = 2 L-ascorbate + NAD(+). Functionally, catalyzes the conversion of monodehydroascorbate to ascorbate, oxidizing NADH in the process. In Pisum sativum (Garden pea), this protein is Monodehydroascorbate reductase.